The chain runs to 185 residues: Ribosome-recycling factor (185 aa).

Belongs to the RRF family.

Its subcellular location is the cytoplasm. Functionally, responsible for the release of ribosomes from messenger RNA at the termination of protein biosynthesis. May increase the efficiency of translation by recycling ribosomes from one round of translation to another. The sequence is that of Ribosome-recycling factor from Bacillus mycoides (strain KBAB4) (Bacillus weihenstephanensis).